The chain runs to 484 residues: Argininosuccinate lyase (484 aa).

Belongs to the lyase 1 family. Argininosuccinate lyase subfamily.

The protein localises to the cytoplasm. The enzyme catalyses 2-(N(omega)-L-arginino)succinate = fumarate + L-arginine. The protein operates within amino-acid biosynthesis; L-arginine biosynthesis; L-arginine from L-ornithine and carbamoyl phosphate: step 3/3. This chain is Argininosuccinate lyase, found in Methanocaldococcus jannaschii (strain ATCC 43067 / DSM 2661 / JAL-1 / JCM 10045 / NBRC 100440) (Methanococcus jannaschii).